Consider the following 162-residue polypeptide: ATP synthase subunit b (162 aa).

The helical transmembrane segment at 8-28 threads the bilayer; the sequence is LTGIIQLLNFLILLFVLYKFL.

This sequence belongs to the ATPase B chain family. F-type ATPases have 2 components, F(1) - the catalytic core - and F(0) - the membrane proton channel. F(1) has five subunits: alpha(3), beta(3), gamma(1), delta(1), epsilon(1). F(0) has three main subunits: a(1), b(2) and c(10-14). The alpha and beta chains form an alternating ring which encloses part of the gamma chain. F(1) is attached to F(0) by a central stalk formed by the gamma and epsilon chains, while a peripheral stalk is formed by the delta and b chains.

The protein localises to the cell inner membrane. Its function is as follows. F(1)F(0) ATP synthase produces ATP from ADP in the presence of a proton or sodium gradient. F-type ATPases consist of two structural domains, F(1) containing the extramembraneous catalytic core and F(0) containing the membrane proton channel, linked together by a central stalk and a peripheral stalk. During catalysis, ATP synthesis in the catalytic domain of F(1) is coupled via a rotary mechanism of the central stalk subunits to proton translocation. Functionally, component of the F(0) channel, it forms part of the peripheral stalk, linking F(1) to F(0). The chain is ATP synthase subunit b from Pseudothermotoga lettingae (strain ATCC BAA-301 / DSM 14385 / NBRC 107922 / TMO) (Thermotoga lettingae).